Here is a 432-residue protein sequence, read N- to C-terminus: Proline--tRNA ligase (432 aa).

This sequence belongs to the class-II aminoacyl-tRNA synthetase family. ProS type 2 subfamily. As to quaternary structure, homodimer.

It is found in the cytoplasm. The enzyme catalyses tRNA(Pro) + L-proline + ATP = L-prolyl-tRNA(Pro) + AMP + diphosphate. Functionally, catalyzes the attachment of proline to tRNA(Pro) in a two-step reaction: proline is first activated by ATP to form Pro-AMP and then transferred to the acceptor end of tRNA(Pro). This is Proline--tRNA ligase from Rickettsia prowazekii (strain Madrid E).